The primary structure comprises 157 residues: 2-C-methyl-D-erythritol 2,4-cyclodiphosphate synthase (157 aa).

Residues D8 and H10 each coordinate a divalent metal cation. Residues 8–10 and 34–35 each bind 4-CDP-2-C-methyl-D-erythritol 2-phosphate; these read DVH and HS. H42 provides a ligand contact to a divalent metal cation. 4-CDP-2-C-methyl-D-erythritol 2-phosphate contacts are provided by residues 56-58, 61-65, 132-135, and F139; these read DIG, FPDTD, and TTEE.

It belongs to the IspF family. Homotrimer. It depends on a divalent metal cation as a cofactor.

It catalyses the reaction 4-CDP-2-C-methyl-D-erythritol 2-phosphate = 2-C-methyl-D-erythritol 2,4-cyclic diphosphate + CMP. The protein operates within isoprenoid biosynthesis; isopentenyl diphosphate biosynthesis via DXP pathway; isopentenyl diphosphate from 1-deoxy-D-xylulose 5-phosphate: step 4/6. In terms of biological role, involved in the biosynthesis of isopentenyl diphosphate (IPP) and dimethylallyl diphosphate (DMAPP), two major building blocks of isoprenoid compounds. Catalyzes the conversion of 4-diphosphocytidyl-2-C-methyl-D-erythritol 2-phosphate (CDP-ME2P) to 2-C-methyl-D-erythritol 2,4-cyclodiphosphate (ME-CPP) with a corresponding release of cytidine 5-monophosphate (CMP). The chain is 2-C-methyl-D-erythritol 2,4-cyclodiphosphate synthase from Clostridium botulinum (strain Alaska E43 / Type E3).